Consider the following 262-residue polypeptide: Carbonic anhydrase 1 (262 aa).

Ala2 bears the N-acetylalanine mark. Residues 4-261 (LNWSYEGENG…LKGRQVKASF (258 aa)) form the Alpha-carbonic anhydrase domain. His65 (proton donor/acceptor) is an active-site residue. His95, His97, and His120 together coordinate Zn(2+). Substrate-binding positions include Thr200 and 200-201 (TH).

The protein belongs to the alpha-carbonic anhydrase family. The cofactor is Zn(2+).

The protein localises to the cytoplasm. The catalysed reaction is hydrogencarbonate + H(+) = CO2 + H2O. The enzyme catalyses urea = cyanamide + H2O. Its activity is regulated as follows. Inhibited by acetazolamide. Catalyzes the reversible hydration of carbon dioxide. Can hydrate cyanamide to urea. This chain is Carbonic anhydrase 1 (CA1), found in Monodelphis domestica (Gray short-tailed opossum).